We begin with the raw amino-acid sequence, 351 residues long: DNA polymerase IV (351 aa).

A UmuC domain is found at 4 to 185 (IIHVDMDCFF…LPLAKIPGVG (182 aa)). The Mg(2+) site is built by D8 and D103. The active site involves E104.

The protein belongs to the DNA polymerase type-Y family. Monomer. Mg(2+) serves as cofactor.

Its subcellular location is the cytoplasm. It catalyses the reaction DNA(n) + a 2'-deoxyribonucleoside 5'-triphosphate = DNA(n+1) + diphosphate. Poorly processive, error-prone DNA polymerase involved in untargeted mutagenesis. Copies undamaged DNA at stalled replication forks, which arise in vivo from mismatched or misaligned primer ends. These misaligned primers can be extended by PolIV. Exhibits no 3'-5' exonuclease (proofreading) activity. May be involved in translesional synthesis, in conjunction with the beta clamp from PolIII. This chain is DNA polymerase IV, found in Escherichia coli (strain ATCC 8739 / DSM 1576 / NBRC 3972 / NCIMB 8545 / WDCM 00012 / Crooks).